A 416-amino-acid polypeptide reads, in one-letter code: Glutamyl-tRNA reductase (416 aa).

Residues 51–54 (TCNR), S110, 115–117 (EPQ), and Q121 each bind substrate. C52 functions as the Nucleophile in the catalytic mechanism. 190–195 (GAGQTG) contacts NADP(+).

The protein belongs to the glutamyl-tRNA reductase family. As to quaternary structure, homodimer.

It carries out the reaction (S)-4-amino-5-oxopentanoate + tRNA(Glu) + NADP(+) = L-glutamyl-tRNA(Glu) + NADPH + H(+). It participates in porphyrin-containing compound metabolism; protoporphyrin-IX biosynthesis; 5-aminolevulinate from L-glutamyl-tRNA(Glu): step 1/2. In terms of biological role, catalyzes the NADPH-dependent reduction of glutamyl-tRNA(Glu) to glutamate 1-semialdehyde (GSA). The sequence is that of Glutamyl-tRNA reductase from Francisella tularensis subsp. tularensis (strain FSC 198).